Consider the following 387-residue polypeptide: Putative serine/threonine-protein kinase (387 aa).

A Protein kinase domain is found at 15–344; that stretch reads YQIEKLLNRG…ERVLEGQVEI (330 aa). ATP contacts are provided by residues 21-29 and lysine 55; that span reads LNRGGMDSY. Aspartate 164 (proton acceptor) is an active-site residue. 2 helical membrane passes run 232 to 252 and 363 to 383; these read PPNA…MLVG and SIFT…LLIF.

This sequence belongs to the protein kinase superfamily. Ser/Thr protein kinase family.

The protein localises to the cell membrane. The enzyme catalyses L-seryl-[protein] + ATP = O-phospho-L-seryl-[protein] + ADP + H(+). It catalyses the reaction L-threonyl-[protein] + ATP = O-phospho-L-threonyl-[protein] + ADP + H(+). This is Putative serine/threonine-protein kinase from Mycoplasma genitalium (strain ATCC 33530 / DSM 19775 / NCTC 10195 / G37) (Mycoplasmoides genitalium).